The sequence spans 1562 residues: Cell wall protein RBR3 (1562 aa).

An N-terminal signal peptide occupies residues 1-20; it reads MIIFRKSFFTFWLLLNSVLA. Residue Asn190 is glycosylated (N-linked (GlcNAc...) asparagine). A compositionally biased stretch (low complexity) spans 338–353; the sequence is APGTNPTEYTTTITTT. The interval 338-366 is disordered; sequence APGTNPTEYTTTITTTNSAGKPLTETGVV. Residue Asn373 is glycosylated (N-linked (GlcNAc...) asparagine). 2 stretches are compositionally biased toward low complexity: residues 383 to 415 and 422 to 729; these read FPTS…SQPS and SSSK…ISAT. Disordered regions lie at residues 383–729, 1404–1424, and 1455–1486; these read FPTS…ISAT, GSGS…SSSN, and YSSG…GNSN. N-linked (GlcNAc...) asparagine glycans are attached at residues Asn602, Asn679, and Asn705. Gly residues predominate over residues 1407–1419; the sequence is SDSGSGSGSGSGS. Residues 1468–1486 show a composition bias toward polar residues; the sequence is GANNVGSNQTPTVSGGNSN. Asn1538 is lipidated: GPI-anchor amidated asparagine. Positions 1539-1562 are cleaved as a propeptide — removed in mature form; it reads SGSKFSVGKSAFIAIILTTFIGFI.

The protein belongs to the HYR1/IFF family. Post-translationally, the GPI-anchor is attached to the protein in the endoplasmic reticulum and serves to target the protein to the cell surface. There, the glucosamine-inositol phospholipid moiety is cleaved off and the GPI-modified mannoprotein is covalently attached via its lipidless GPI glycan remnant to the 1,6-beta-glucan of the outer cell wall layer.

Its subcellular location is the secreted. It is found in the cell wall. It localises to the membrane. GPI-anchored cell wall protein involved in cell wall organization, hyphal growth, as well as in host-fungal interaction and virulence. This is Cell wall protein RBR3 (RBR3) from Candida albicans (strain SC5314 / ATCC MYA-2876) (Yeast).